Here is a 178-residue protein sequence, read N- to C-terminus: UPF0098 protein PYRAB11530 (178 aa).

The N-terminal stretch at Met-1–Gly-22 is a signal peptide.

It belongs to the UPF0098 family.

The chain is UPF0098 protein PYRAB11530 from Pyrococcus abyssi (strain GE5 / Orsay).